The chain runs to 457 residues: uncharacterized protein (457 aa).

2 helical membrane-spanning segments follow: residues 1–21 (MVSS…MTLL) and 250–270 (ILIV…ATTF).

The protein resides in the membrane. This is an uncharacterized protein from Saccharomyces cerevisiae (strain ATCC 204508 / S288c) (Baker's yeast).